Reading from the N-terminus, the 871-residue chain is Rho guanine nucleotide exchange factor 26 (871 aa).

Disordered stretches follow at residues 1–49 (MDGE…LLIT), 86–233 (AQRR…NPSV), and 288–310 (PLGH…SLRR). The residue at position 22 (Ser22) is a Phosphoserine. The segment covering 136–156 (PAPPPPPVLRPPRTPNAPAPC) has biased composition (pro residues). The span at 173 to 192 (PTANGLAANNDSPGSGSQSG) shows a compositional bias: polar residues. Ser392 is subject to Phosphoserine. The region spanning 439–623 (KRQEAIFEVI…SKLVRLCNEG (185 aa)) is the DH domain. Residues 655–782 (WLVKRGELTA…WITALGHSSG (128 aa)) form the PH domain. Positions 789-850 (TSLTQVEIVR…PMECAKEITC (62 aa)) constitute an SH3 domain.

Interacts with ICAM1 and RHOG. Isoform 1 is broadly expressed, with highest levels in liver (at protein level). Certain mRNA species appear to be specifically expressed in prostate and liver.

The protein resides in the cell projection. It is found in the ruffle. Its function is as follows. Activates RhoG GTPase by promoting the exchange of GDP by GTP. Required for the formation of membrane ruffles during macropinocytosis. Required for the formation of cup-like structures during trans-endothelial migration of leukocytes. In case of Salmonella enterica infection, activated by SopB, which induces cytoskeleton rearrangements and promotes bacterial entry. The chain is Rho guanine nucleotide exchange factor 26 (ARHGEF26) from Homo sapiens (Human).